The following is a 321-amino-acid chain: Chitinase-like protein 1 (321 aa).

An N-terminal signal peptide occupies residues Met1–Gly26. A disulfide bond links Cys42 and Cys55. N-linked (GlcNAc...) asparagine glycosylation occurs at Asn57. Cys157 and Cys167 are disulfide-bonded. 2 N-linked (GlcNAc...) asparagine glycosylation sites follow: Asn208 and Asn244. An intrachain disulfide couples Cys267 to Cys304. The interval Gly297–Ser321 is disordered. A compositionally biased stretch (polar residues) spans Phe310–Ser321.

Belongs to the glycosyl hydrolase 19 family. In terms of tissue distribution, mostly expressed in seedlings shoots and roots, stems, and flowers, and, to a lower extent, in flowers, mature leaves and roots.

It is found in the secreted. No chitinase activity. Essential for normal plant growth and development. Regulates cell expansion extent and differentiation at least in roots and hypocotyls. Prevents lignin accumulation in the pith. May modulate ethylene-mediated regulation during development. Probably required to establish thermotolerance acclimation. Plays a role for controlled anisotropic cell expansion in the regulation of waving during root gravitropism and thigmotropism. Involved in the root system architecture adaptation to multiple environmental conditions such as nitrate. Contributes to salt tolerance and possibly to drought by preventing the overaccumulation of sodium ions. The protein is Chitinase-like protein 1 (CTL1) of Arabidopsis thaliana (Mouse-ear cress).